The following is a 72-amino-acid chain: High-potential iron-sulfur protein isozyme 1 (72 aa).

Residues cysteine 34, cysteine 37, cysteine 51, and cysteine 65 each coordinate [4Fe-4S] cluster.

The protein belongs to the high-potential iron-sulfur protein (HiPIP) family. As to quaternary structure, homodimer.

Specific class of high-redox-potential 4Fe-4S ferredoxins. Functions in anaerobic electron transport in most purple and in some other photosynthetic bacteria and in at least one genus (Paracoccus) of halophilic, denitrifying bacteria. The chain is High-potential iron-sulfur protein isozyme 1 (hip1) from Ectothiorhodospira shaposhnikovii (Ectothiorhodospira vacuolata).